A 353-amino-acid polypeptide reads, in one-letter code: MTAILAKNEASSLWARFCEWITSTENRLYIGWFGVIMIPTLLTATSVFIIAFIAAPPVDIDGIREPVSGSLLYGNNIISGAVVPTSNAIGLHFYPIWEAASLDEWLYNGGPYQLIVCHFFLGICCYMGREWELSYRLGMRPWIAVAYSAPVAAATAVFIIYPIGQGSFSDGMPLGISGTFNFMIVFQAEHNILMHPFHMLGVAGVFGGSLFSAMHGSLVTSSLIRETTENESANEGYKFGQEEETYNIVAAHGYFGRLIFQYASFNNSRSLHFFLAAWPVVGIWFTALGISTMAFNLNGFNFNQSVVDSQGRVLNTWADIINRANLGMEVMHERNAHNFPLDLASVEAPSVNA.

Thr-2 carries the N-acetylthreonine modification. Thr-2 is modified (phosphothreonine). 3 helical membrane-spanning segments follow: residues 29–46, 118–133, and 142–156; these read YIGW…TATS, HFFL…EWEL, and WIAV…AATA. His-118 contributes to the chlorophyll a binding site. Tyr-126 contacts pheophytin a. Positions 170 and 189 each coordinate [CaMn4O5] cluster. A helical membrane pass occupies residues 197-218; the sequence is FHMLGVAGVFGGSLFSAMHGSL. His-198 provides a ligand contact to chlorophyll a. A quinone is bound by residues His-215 and 264-265; that span reads SF. His-215 is a Fe cation binding site. A Fe cation-binding site is contributed by His-272. A helical transmembrane segment spans residues 274-288; that stretch reads FLAAWPVVGIWFTAL. [CaMn4O5] cluster-binding residues include His-332, Glu-333, Asp-342, and Ala-344. Positions 345-353 are excised as a propeptide; sequence SVEAPSVNA.

Belongs to the reaction center PufL/M/PsbA/D family. In terms of assembly, PSII is composed of 1 copy each of membrane proteins PsbA, PsbB, PsbC, PsbD, PsbE, PsbF, PsbH, PsbI, PsbJ, PsbK, PsbL, PsbM, PsbT, PsbX, PsbY, PsbZ, Psb30/Ycf12, at least 3 peripheral proteins of the oxygen-evolving complex and a large number of cofactors. It forms dimeric complexes. The cofactor is The D1/D2 heterodimer binds P680, chlorophylls that are the primary electron donor of PSII, and subsequent electron acceptors. It shares a non-heme iron and each subunit binds pheophytin, quinone, additional chlorophylls, carotenoids and lipids. D1 provides most of the ligands for the Mn4-Ca-O5 cluster of the oxygen-evolving complex (OEC). There is also a Cl(-1) ion associated with D1 and D2, which is required for oxygen evolution. The PSII complex binds additional chlorophylls, carotenoids and specific lipids.. The 9 C-terminal residues are removed, probably by CTPA (AC O04073); processing is essential to allow assembly of the oxygen-evolving complex and thus photosynthetic growth. In terms of processing, tyr-161 forms a radical intermediate that is referred to as redox-active TyrZ, YZ or Y-Z.

The protein localises to the plastid. It localises to the chloroplast thylakoid membrane. The enzyme catalyses 2 a plastoquinone + 4 hnu + 2 H2O = 2 a plastoquinol + O2. In terms of biological role, photosystem II (PSII) is a light-driven water:plastoquinone oxidoreductase that uses light energy to abstract electrons from H(2)O, generating O(2) and a proton gradient subsequently used for ATP formation. It consists of a core antenna complex that captures photons, and an electron transfer chain that converts photonic excitation into a charge separation. The D1/D2 (PsbA/PsbD) reaction center heterodimer binds P680, the primary electron donor of PSII as well as several subsequent electron acceptors. The protein is Photosystem II protein D1 of Tetradesmus obliquus (Green alga).